Reading from the N-terminus, the 391-residue chain is 3-ketoacyl-CoA thiolase (391 aa).

Residue C95 is the Acyl-thioester intermediate of the active site. Catalysis depends on proton acceptor residues H347 and C377.

This sequence belongs to the thiolase-like superfamily. Thiolase family. Heterotetramer of two alpha chains (FadB) and two beta chains (FadA).

Its subcellular location is the cytoplasm. The catalysed reaction is an acyl-CoA + acetyl-CoA = a 3-oxoacyl-CoA + CoA. It functions in the pathway lipid metabolism; fatty acid beta-oxidation. Functionally, catalyzes the final step of fatty acid oxidation in which acetyl-CoA is released and the CoA ester of a fatty acid two carbons shorter is formed. This is 3-ketoacyl-CoA thiolase from Pseudomonas fluorescens (strain ATCC BAA-477 / NRRL B-23932 / Pf-5).